We begin with the raw amino-acid sequence, 123 residues long: Large ribosomal subunit protein bL12 (123 aa).

It belongs to the bacterial ribosomal protein bL12 family. As to quaternary structure, homodimer. Part of the ribosomal stalk of the 50S ribosomal subunit. Forms a multimeric L10(L12)X complex, where L10 forms an elongated spine to which 2 to 4 L12 dimers bind in a sequential fashion. Binds GTP-bound translation factors.

In terms of biological role, forms part of the ribosomal stalk which helps the ribosome interact with GTP-bound translation factors. Is thus essential for accurate translation. The sequence is that of Large ribosomal subunit protein bL12 from Clostridium botulinum (strain ATCC 19397 / Type A).